A 1209-amino-acid chain; its full sequence is Calcium-activated potassium channel subunit alpha-1 (1209 aa).

Positions 1–26 are enriched in gly residues; the sequence is MANGGGGGGGGSSGSSGGGGGGGGGE. 2 disordered regions span residues 1–29 and 42–64; these read MANGGGGGGGGSSGSSGGGGGGGGGETAL and LDASSSSSSSSSSSSSSSSSVHE. The Extracellular segment spans residues 1–87; it reads MANGGGGGGG…VPCDSRGQRM (87 aa). Over residues 45 to 61 the composition is skewed to low complexity; it reads SSSSSSSSSSSSSSSSS. A helical membrane pass occupies residues 88-108; sequence WWAFLASSMVTFFGGLFIILL. The Cytoplasmic portion of the chain corresponds to 109–179; sequence WRTLKYLWTV…MISAQTLTGR (71 aa). 3 S-palmitoyl cysteine lipidation sites follow: cysteine 119, cysteine 120, and cysteine 122. The helical transmembrane segment at 180-200 threads the bilayer; it reads VLVVLVFALSIGALVIYFIDS. Over 201–215 the chain is Extracellular; it reads SNPIESCQNFYKDFT. A helical membrane pass occupies residues 216-236; the sequence is LQIDMAFNVFFLLYFGLRFIA. Residues 237–240 lie on the Cytoplasmic side of the membrane; it reads ANDK. The chain crosses the membrane as a helical span at residues 241–261; sequence LWFWLEVNSVVDFFTVPPVFV. Over 262 to 265 the chain is Extracellular; the sequence is SVYL. Residues 266 to 286 form a helical; Voltage-sensor membrane-spanning segment; sequence NRSWLGLRFLRALRLIQFSEI. The Cytoplasmic portion of the chain corresponds to 287-301; it reads LQFLNILKTSNSIKL. A helical transmembrane segment spans residues 302 to 322; sequence VNLLSIFISTWLTAAGFIHLV. Residues 323–336 are Extracellular-facing; it reads ENSGDPWENFQNNQ. The pore-forming intramembrane region spans 337–359; sequence ALTYWECVYLLMVTMSTVGYGDV. Positions 353 to 356 match the Selectivity for potassium motif; sequence TVGY. The Extracellular segment spans residues 360–368; sequence YAKTTLGRL. Residues 369–389 traverse the membrane as a helical segment; that stretch reads FMVFFILGGLAMFASYVPEII. Topologically, residues 390 to 1209 are cytoplasmic; sequence ELIGNRKKYG…DKQKKEMVYR (820 aa). The region spanning 408 to 550 is the RCK N-terminal 1 domain; it reads RKHIVVCGHI…WNWKEGDDAI (143 aa). Positions 440, 463, and 465 each coordinate Mg(2+). Residues 557 to 577 are segment S7; sequence LGFIAQSCLAQGLSTMLANLF. Residues 614 to 634 are segment S8; it reads LSFPTVCELCFVKLKLLMIAI. Residues 682–686 form a heme-binding motif region; that stretch reads CKACH. A disordered region spans residues 704 to 734; the sequence is EDEQPPTLSPKKKQRNGGMRNSPNTSPKLMR. At threonine 710 the chain carries Phosphothreonine. Residues serine 712, serine 725, and serine 729 each carry the phosphoserine modification. The segment S9 stretch occupies residues 784 to 804; sequence VLSGHVVVCIFGDVSSALIGL. The RCK N-terminal 2 domain maps to 786-930; it reads SGHVVVCIFG…MDRSSPDNSP (145 aa). Residue threonine 917 is modified to Phosphothreonine. 2 positions are modified to phosphoserine: serine 925 and serine 929. The short motif at 977 to 999 is the Calcium bowl element; sequence TELVNDTNVQFLDQDDDDDPDTE. Residues glutamine 986, aspartate 989, aspartate 992, and aspartate 994 each contribute to the Ca(2+) site. Residues 1006 to 1026 are segment S10; it reads FACGTAFAVSVLDSLMSATYF. Residues 1160–1185 are compositionally biased toward low complexity; that stretch reads RASLSHSSHSSQSSSKKSSSVHSIPS. The segment at 1160 to 1209 is disordered; that stretch reads RASLSHSSHSSQSSSKKSSSVHSIPSTANRPNRPKSRESRDKQKKEMVYR. The span at 1194 to 1209 shows a compositional bias: basic and acidic residues; the sequence is KSRESRDKQKKEMVYR. A phosphoserine mark is found at serine 1195 and serine 1198.

It belongs to the potassium channel family. Calcium-activated (TC 1.A.1.3) subfamily. KCa1.1/KCNMA1 sub-subfamily. Homotetramer; which constitutes the calcium-activated potassium channel. Interacts with beta subunits KCNMB1, KCNMB2, KCNMB3 and KCNMB4. Interacts with gamma subunits LRRC26, LRRC38, LRRC52 and LRRC55. Beta and gamma subunits are accessory, and modulate its activity. Interacts with RAB11B. In terms of processing, phosphorylated. Phosphorylation by kinases such as PKA and/or PKG. In smooth muscles, phosphorylation affects its activity. Post-translationally, palmitoylation by ZDHHC22 and ZDHHC23 within the intracellular linker between the S0 and S1 transmembrane domains regulates localization to the plasma membrane. Depalmitoylated by LYPLA1 and LYPLAL1, leading to retard exit from the trans-Golgi network.

The protein resides in the cell membrane. It localises to the endoplasmic reticulum membrane. The enzyme catalyses K(+)(in) = K(+)(out). With respect to regulation, ethanol and carbon monoxide-bound heme increase channel activation. Its activity is regulated as follows. Heme inhibits channel activation. Potassium channel activated by both membrane depolarization or increase in cytosolic Ca(2+) that mediates export of K(+). It is also activated by the concentration of cytosolic Mg(2+). Its activation dampens the excitatory events that elevate the cytosolic Ca(2+) concentration and/or depolarize the cell membrane. It therefore contributes to repolarization of the membrane potential. Plays a key role in controlling excitability in a number of systems, such as regulation of the contraction of smooth muscle, the tuning of hair cells in the cochlea, regulation of transmitter release, and innate immunity. In smooth muscles, its activation by high level of Ca(2+), caused by ryanodine receptors in the sarcoplasmic reticulum, regulates the membrane potential. In cochlea cells, its number and kinetic properties partly determine the characteristic frequency of each hair cell and thereby helps to establish a tonotopic map. Kinetics of KCNMA1 channels are determined by alternative splicing, phosphorylation status and its combination with modulating beta subunits. Highly sensitive to both iberiotoxin (IbTx) and charybdotoxin (CTX). Its function is as follows. Potassium channel activated by both membrane depolarization or increase in cytosolic Ca(2+) that mediates export of K(+). The polypeptide is Calcium-activated potassium channel subunit alpha-1 (Kcnma1) (Rattus norvegicus (Rat)).